We begin with the raw amino-acid sequence, 438 residues long: Coenzyme A disulfide reductase (438 aa).

An FAD-binding site is contributed by 8–33 (GAVAGGATCASQIRRLDKESDIIIFE). The substrate site is built by threonine 15, glutamine 19, arginine 22, serine 39, and asparagine 42. Cysteine 43 (nucleophile) is an active-site residue. Residue cysteine 43 is the Redox-active of the active site. Lysine 71 contacts substrate. An NADP(+)-binding site is contributed by 151 to 166 (VLVIGAGYVSLEVLEN). An FAD-binding site is contributed by 267-277 (TNVPNIYAIGD). Substrate is bound at residue histidine 299. FAD is bound at residue tyrosine 419. Lysine 427 provides a ligand contact to substrate.

This sequence belongs to the class-III pyridine nucleotide-disulfide oxidoreductase family. In terms of assembly, homodimer. Requires FAD as cofactor.

The enzyme catalyses NADP(+) + 2 CoA = CoA-disulfide + NADPH + H(+). In terms of biological role, catalyzes specifically the NADPH-dependent reduction of coenzyme A disulfide. This is Coenzyme A disulfide reductase from Staphylococcus aureus (strain JH1).